A 360-amino-acid polypeptide reads, in one-letter code: Small ribosomal subunit protein bS1m (360 aa).

The span at 1–15 (MSSSNLSSILRNSRI) shows a compositional bias: low complexity. Residues 1–31 (MSSSNLSSILRNSRIAQVPKPKGPLFSPDKK) form a disordered region.

This sequence belongs to the bacterial ribosomal protein bS1 family. As to quaternary structure, component of the mitochondrial small ribosomal subunit.

The protein localises to the mitochondrion. In terms of biological role, involved in mitochondrial genome encoded proteins translation. The chain is Small ribosomal subunit protein bS1m (MRP51) from Eremothecium gossypii (strain ATCC 10895 / CBS 109.51 / FGSC 9923 / NRRL Y-1056) (Yeast).